The chain runs to 153 residues: Ribosome maturation factor RimP (153 aa).

The protein belongs to the RimP family.

Its subcellular location is the cytoplasm. In terms of biological role, required for maturation of 30S ribosomal subunits. The chain is Ribosome maturation factor RimP from Coxiella burnetii (strain CbuK_Q154) (Coxiella burnetii (strain Q154)).